The primary structure comprises 281 residues: Bifunctional protein FolD (281 aa).

NADP(+) contacts are provided by residues 164 to 166 (GRS) and S189.

It belongs to the tetrahydrofolate dehydrogenase/cyclohydrolase family. As to quaternary structure, homodimer.

The catalysed reaction is (6R)-5,10-methylene-5,6,7,8-tetrahydrofolate + NADP(+) = (6R)-5,10-methenyltetrahydrofolate + NADPH. It carries out the reaction (6R)-5,10-methenyltetrahydrofolate + H2O = (6R)-10-formyltetrahydrofolate + H(+). Its pathway is one-carbon metabolism; tetrahydrofolate interconversion. In terms of biological role, catalyzes the oxidation of 5,10-methylenetetrahydrofolate to 5,10-methenyltetrahydrofolate and then the hydrolysis of 5,10-methenyltetrahydrofolate to 10-formyltetrahydrofolate. The sequence is that of Bifunctional protein FolD from Enterococcus faecalis (strain ATCC 700802 / V583).